The following is a 75-amino-acid chain: Dermaseptin-SP4 (75 aa).

Positions 1-22 are cleaved as a signal peptide; it reads MAFLKKSLFLVLFLGLVSLSMC. The propeptide occupies 23 to 45; sequence EEEKRENEVEEEQEDDEQSELRR. P72 is subject to Proline amide. Positions 74-75 are excised as a propeptide; the sequence is EQ.

The protein belongs to the frog skin active peptide (FSAP) family. Dermaseptin subfamily. Expressed by the skin glands.

The protein localises to the secreted. It localises to the target cell membrane. Functionally, antimicrobial peptide with activity against Gram-positive and Gram-negative bacteria and fungi. Has been tested against E.coli (MIC=47.25-128 uM), S.aureus (MIC=189-512 uM), K.pneumoniae (MIC=189 uM) and C.albicans (MIC&gt;189 uM). Probably acts by disturbing membrane functions with its alpha-helical amphipathic structure. May penetrate bacterial membranes, but stay at the mammalian membrane surface. Shows a weak hemolytic activity. The chain is Dermaseptin-SP4 from Agalychnis spurrelli (Gliding leaf frog).